We begin with the raw amino-acid sequence, 133 residues long: Protein OPG104 (133 aa).

At 1–111 (MTDEQIYAFC…RYLNQEIRYP (111 aa)) the chain is on the virion surface side. A helical; Signal-anchor membrane pass occupies residues 112-132 (IIDIKWLPIGLLALAILILAF).

Belongs to the orthopoxvirus OPG104 family. As to quaternary structure, part of a stable entry-fusion complex (EFC) which is at least composed of proteins OPG143, OPG147, OPG155, OPG086, OPG094, OPG107, OPG104, and OPG099. Formation of the viral membrane is necessary for the assembly of the complex.

The protein localises to the virion membrane. Its function is as follows. Envelope protein part of the entry-fusion complex responsible for the virus membrane fusion with host cell membrane during virus entry. Also plays a role in cell-cell fusion (syncytium formation). The protein is Protein OPG104 (OPG104) of Homo sapiens (Human).